The primary structure comprises 932 residues: Protocadherin gamma-A7 (932 aa).

Residues M1–A28 form the signal peptide. 6 Cadherin domains span residues G29–F133, L134–F242, S243–V347, T348–F452, P453–I562, and D570–D682. Residues G29–Y692 are Extracellular-facing. 2 N-linked (GlcNAc...) asparagine glycosylation sites follow: N419 and N545. A helical transmembrane segment spans residues L693–A713. Residues L714–K932 are Cytoplasmic-facing. 2 disordered regions span residues V804–N841 and A902–K932. Residues S806–N841 show a composition bias toward polar residues. Residues N922–K932 are compositionally biased toward basic residues.

The protein localises to the cell membrane. Its function is as follows. Potential calcium-dependent cell-adhesion protein. May be involved in the establishment and maintenance of specific neuronal connections in the brain. This Pan troglodytes (Chimpanzee) protein is Protocadherin gamma-A7 (PCDHGA7).